The following is a 734-amino-acid chain: Photosystem I P700 chlorophyll a apoprotein A2 (734 aa).

The next 8 helical transmembrane spans lie at 46 to 69 (IFAS…FHVA), 135 to 158 (LYTG…LHLQ), 175 to 199 (LNHH…HVAI), 273 to 291 (IAHH…GHMY), 330 to 353 (LHFQ…QHMY), 369 to 395 (AALY…IFFI), 417 to 439 (AIIS…LYVH), and 517 to 535 (FLVH…LILV). Residues C559 and C568 each coordinate [4Fe-4S] cluster. 2 helical membrane-spanning segments follow: residues 575-596 (AFYL…YWHW) and 643-665 (LSVW…MFLI). Residues H654, M662, and Y670 each coordinate chlorophyll a. W671 is a phylloquinone binding site. The helical transmembrane segment at 707–727 (LVGLAHFSVGYIFTYAAFLIA) threads the bilayer.

It belongs to the PsaA/PsaB family. As to quaternary structure, the PsaA/B heterodimer binds the P700 chlorophyll special pair and subsequent electron acceptors. PSI consists of a core antenna complex that captures photons, and an electron transfer chain that converts photonic excitation into a charge separation. The eukaryotic PSI reaction center is composed of at least 11 subunits. P700 is a chlorophyll a/chlorophyll a' dimer, A0 is one or more chlorophyll a, A1 is one or both phylloquinones and FX is a shared 4Fe-4S iron-sulfur center. is required as a cofactor.

The protein resides in the plastid. The protein localises to the chloroplast thylakoid membrane. It carries out the reaction reduced [plastocyanin] + hnu + oxidized [2Fe-2S]-[ferredoxin] = oxidized [plastocyanin] + reduced [2Fe-2S]-[ferredoxin]. Its function is as follows. PsaA and PsaB bind P700, the primary electron donor of photosystem I (PSI), as well as the electron acceptors A0, A1 and FX. PSI is a plastocyanin-ferredoxin oxidoreductase, converting photonic excitation into a charge separation, which transfers an electron from the donor P700 chlorophyll pair to the spectroscopically characterized acceptors A0, A1, FX, FA and FB in turn. Oxidized P700 is reduced on the lumenal side of the thylakoid membrane by plastocyanin. This chain is Photosystem I P700 chlorophyll a apoprotein A2, found in Piper cenocladum (Ant piper).